We begin with the raw amino-acid sequence, 271 residues long: Insulin-like growth factor-binding protein 5 (271 aa).

A signal peptide spans 1-19 (MVLTAVLLLLAACAGPAQG). The IGFBP N-terminal domain occupies 22–102 (SFVHCEPCDE…LHGRGVCLNE (81 aa)). Disulfide bonds link C26–C52, C29–C54, C37–C55, C44–C58, C66–C79, and C73–C99. The span at 109–121 (AKIERDSREHEEP) shows a compositional bias: basic and acidic residues. Residues 109-129 (AKIERDSREHEEPTTSEMAEE) are disordered. S115 is modified (phosphoserine). A Thyroglobulin type-1 domain is found at 188–262 (QGPCRRHMEA…MEYVDGDFQC (75 aa)). Cystine bridges form between C191/C218, C229/C240, and C242/C262.

In terms of assembly, interacts with IGF1; this interaction enhances the growth stimulatory effects of IGF1 on fibroblasts. Interacts with CAV1; this interaction allows trafficking of IGFBP5 from the plasma membrane to the nucleus. Interacts with NCL; this interaction is necessary for IGFBP5 localization to the nucleus.

It localises to the secreted. Its subcellular location is the cytoplasm. It is found in the nucleus. Its function is as follows. Multifunctional protein that plays a critical role in regulating the availability of IGFs to their receptors and thereby regulates IGF-mediated cellular processes including proliferation, differentiation, and apoptosis in a cell-type specific manner. Increases the cell proliferation of osteoblasts, intestinal smooth muscle cells and neuroblastoma cells. Enhances adhesion and survival of epithelial cells but decreases adhesion of mesenchymal cells. Once secreted, acts as a major mediator of mTORC1-dependent feedback inhibition of IGF1 signaling. Also plays a role in the induction of extracellular matrix (ECM) production and deposition independently of its nuclear translocation and binding to IGFs. Acts itself as a growth factor that can act independently of IGFs to regulate bone formation. Acts as a ligand for the ROR1 receptor which triggers formation of ROR1/HER2 heterodimer to enhance CREB oncogenic signaling. The polypeptide is Insulin-like growth factor-binding protein 5 (IGFBP5) (Sus scrofa (Pig)).